We begin with the raw amino-acid sequence, 268 residues long: Chymotrypsin-C (268 aa).

The N-terminal stretch at 1–16 (MLGITVLAAILACASS) is a signal peptide. A propeptide spans 17–29 (CGDPTFPPNLSAR) (activation peptide). Intrachain disulfides connect Cys17–Cys141, Cys59–Cys75, Cys155–Cys222, Cys186–Cys202, and Cys212–Cys243. N-linked (GlcNAc...) asparagine glycosylation occurs at Asn25. In terms of domain architecture, Peptidase S1 spans 30–267 (VVGGEDAVPN…YIDWIKEKIQ (238 aa)). Catalysis depends on His74, which acts as the Charge relay system. N-linked (GlcNAc...) asparagine glycosylation is found at Asn79 and Asn90. Asp121 serves as the catalytic Charge relay system. The N-linked (GlcNAc...) asparagine glycan is linked to Asn182. Catalysis depends on Ser216, which acts as the Charge relay system.

The protein belongs to the peptidase S1 family. Elastase subfamily.

The enzyme catalyses Preferential cleavage: Leu-|-Xaa, Tyr-|-Xaa, Phe-|-Xaa, Met-|-Xaa, Trp-|-Xaa, Gln-|-Xaa, Asn-|-Xaa.. In terms of biological role, regulates activation and degradation of trypsinogens and procarboxypeptidases by targeting specific cleavage sites within their zymogen precursors. Has chymotrypsin-type protease activity and hypocalcemic activity. Cleaves TRY4 and TRY5 and thereby inhibits their autoactivation. The chain is Chymotrypsin-C (Ctrc) from Mus musculus (Mouse).